The following is a 527-amino-acid chain: EGF domain-specific O-linked N-acetylglucosamine transferase (527 aa).

The signal sequence occupies residues 1-17; that stretch reads MLKLLVLGVLLHDVSLS. The Required for optimal activity motif lies at 295–297; that stretch reads DYD. Residue Asn-354 is glycosylated (N-linked (GlcNAc...) asparagine). A Prevents secretion from ER motif is present at residues 524–527; sequence RDEL.

The protein belongs to the glycosyltransferase 61 family.

It is found in the endoplasmic reticulum lumen. It carries out the reaction L-seryl-[protein] + UDP-N-acetyl-alpha-D-glucosamine = 3-O-(N-acetyl-beta-D-glucosaminyl)-L-seryl-[protein] + UDP + H(+). It catalyses the reaction L-threonyl-[protein] + UDP-N-acetyl-alpha-D-glucosamine = 3-O-(N-acetyl-beta-D-glucosaminyl)-L-threonyl-[protein] + UDP + H(+). In terms of biological role, catalyzes the transfer of a single N-acetylglucosamine from UDP-GlcNAc to a serine or threonine residue in extracellular proteins resulting in their modification with a beta-linked N-acetylglucosamine (O-GlcNAc). Specifically glycosylates the Thr residue located between the fifth and sixth conserved cysteines of folded EGF-like domains. This chain is EGF domain-specific O-linked N-acetylglucosamine transferase (EOGT), found in Canis lupus familiaris (Dog).